The chain runs to 63 residues: Large ribosomal subunit protein bL32 (63 aa).

Residues M1 to V27 are disordered. The span at K7 to A18 shows a compositional bias: basic residues.

Belongs to the bacterial ribosomal protein bL32 family.

The polypeptide is Large ribosomal subunit protein bL32 (Chlorobium phaeobacteroides (strain DSM 266 / SMG 266 / 2430)).